The following is a 428-amino-acid chain: Glutamate-1-semialdehyde 2,1-aminomutase (428 aa).

At lysine 265 the chain carries N6-(pyridoxal phosphate)lysine.

This sequence belongs to the class-III pyridoxal-phosphate-dependent aminotransferase family. HemL subfamily. As to quaternary structure, homodimer. Pyridoxal 5'-phosphate is required as a cofactor.

It is found in the cytoplasm. It catalyses the reaction (S)-4-amino-5-oxopentanoate = 5-aminolevulinate. It functions in the pathway porphyrin-containing compound metabolism; protoporphyrin-IX biosynthesis; 5-aminolevulinate from L-glutamyl-tRNA(Glu): step 2/2. The protein is Glutamate-1-semialdehyde 2,1-aminomutase of Methylobacillus flagellatus (strain ATCC 51484 / DSM 6875 / VKM B-1610 / KT).